Here is a 155-residue protein sequence, read N- to C-terminus: 6,7-dimethyl-8-ribityllumazine synthase (155 aa).

Residues phenylalanine 23, 57–59, and 81–83 contribute to the 5-amino-6-(D-ribitylamino)uracil site; these read AFE and AVI. (2S)-2-hydroxy-3-oxobutyl phosphate is bound at residue 86 to 87; that stretch reads ST. Histidine 89 acts as the Proton donor in catalysis. Phenylalanine 114 contacts 5-amino-6-(D-ribitylamino)uracil. Arginine 128 contributes to the (2S)-2-hydroxy-3-oxobutyl phosphate binding site.

The protein belongs to the DMRL synthase family.

It catalyses the reaction (2S)-2-hydroxy-3-oxobutyl phosphate + 5-amino-6-(D-ribitylamino)uracil = 6,7-dimethyl-8-(1-D-ribityl)lumazine + phosphate + 2 H2O + H(+). Its pathway is cofactor biosynthesis; riboflavin biosynthesis; riboflavin from 2-hydroxy-3-oxobutyl phosphate and 5-amino-6-(D-ribitylamino)uracil: step 1/2. Its function is as follows. Catalyzes the formation of 6,7-dimethyl-8-ribityllumazine by condensation of 5-amino-6-(D-ribitylamino)uracil with 3,4-dihydroxy-2-butanone 4-phosphate. This is the penultimate step in the biosynthesis of riboflavin. In Desulfatibacillum aliphaticivorans, this protein is 6,7-dimethyl-8-ribityllumazine synthase.